A 606-amino-acid chain; its full sequence is Diphthine--ammonia ligase (606 aa).

The protein in the N-terminal section; belongs to the Diphthine--ammonia ligase family. It in the C-terminal section; belongs to the RutC family.

The protein resides in the cytoplasm. It localises to the nucleus. The enzyme catalyses diphthine-[translation elongation factor 2] + NH4(+) + ATP = diphthamide-[translation elongation factor 2] + AMP + diphosphate + H(+). It participates in protein modification; peptidyl-diphthamide biosynthesis. In terms of biological role, amidase that catalyzes the last step of diphthamide biosynthesis using ammonium and ATP. Diphthamide biosynthesis consists in the conversion of an L-histidine residue in the translation elongation factor eEF-2 (eft201 or eft202) to diphthamide. Has a role in meiosis. The sequence is that of Diphthine--ammonia ligase (mug71) from Schizosaccharomyces pombe (strain 972 / ATCC 24843) (Fission yeast).